The sequence spans 387 residues: MNIHEYQAKHILSKFGVNVPKGVVVHSLGEVDGALSQLNSKVVVVKAQIHAGGRGKAGGVVVSRTLDETKTSIKNMLGSTLITHQTSKDGQKVRKVYLEEGCNIKKEYYISAIVNRKQGQVSIIFSTEGGVDIEEVAATSPEKVIVCNINPVFGFQGFHGRNLCFDSNLSLDQTRKISDIAGKIYKAVLSTDANQIEINPLVETSSGEFIALDAKINFDDNALYRHPDIQELRDYDEEIKEEIEASKHGLSYIKMDGNIGCMVNGAGLAMATMDIIKYYGAEPANFLDVGGGASQKTVTEAFKIILADDKVNGILVNIFGGIMRCDIIANGIIAAIQEIGINVPLVVRLSGTNFELGKKLLDDSNLNIITANDLSEAAYNIVNIVRK.

In terms of domain architecture, ATP-grasp spans 9 to 244 (KHILSKFGVN…YDEEIKEEIE (236 aa)). Residues Lys46, 53-55 (GRG), Glu99, Cys102, and Glu107 each bind ATP. Positions 199 and 213 each coordinate Mg(2+). Residues Asn264 and 321-323 (GIM) contribute to the substrate site.

Belongs to the succinate/malate CoA ligase beta subunit family. Heterotetramer of two alpha and two beta subunits. Requires Mg(2+) as cofactor.

It carries out the reaction succinate + ATP + CoA = succinyl-CoA + ADP + phosphate. The catalysed reaction is GTP + succinate + CoA = succinyl-CoA + GDP + phosphate. The protein operates within carbohydrate metabolism; tricarboxylic acid cycle; succinate from succinyl-CoA (ligase route): step 1/1. In terms of biological role, succinyl-CoA synthetase functions in the citric acid cycle (TCA), coupling the hydrolysis of succinyl-CoA to the synthesis of either ATP or GTP and thus represents the only step of substrate-level phosphorylation in the TCA. The beta subunit provides nucleotide specificity of the enzyme and binds the substrate succinate, while the binding sites for coenzyme A and phosphate are found in the alpha subunit. This is Succinate--CoA ligase [ADP-forming] subunit beta from Ehrlichia chaffeensis (strain ATCC CRL-10679 / Arkansas).